Here is a 36-residue protein sequence, read N- to C-terminus: Photosystem II reaction center protein Y (36 aa).

The Lumenal segment spans residues 1-4 (MDSR). A helical transmembrane segment spans residues 5–23 (LLVVLIPVLAAASWAVYNI). Topologically, residues 24–36 (GRVALQQFRKMTS) are stromal.

It belongs to the PsbY family. As to quaternary structure, PSII is composed of 1 copy each of membrane proteins PsbA, PsbB, PsbC, PsbD, PsbE, PsbF, PsbH, PsbI, PsbJ, PsbK, PsbL, PsbM, PsbT, PsbX, PsbY, PsbZ, Psb30/Ycf12, at least 3 peripheral proteins of the oxygen-evolving complex and a large number of cofactors. It forms dimeric complexes.

Its subcellular location is the plastid. It localises to the chloroplast thylakoid membrane. Functionally, loosely associated component of the core of photosystem II (PSII), it is not always seen in crystals. PSII is a light-driven water plastoquinone oxidoreductase, using light energy to abstract electrons from H(2)O, generating a proton gradient subsequently used for ATP formation. The polypeptide is Photosystem II reaction center protein Y (Pyropia yezoensis (Susabi-nori)).